The primary structure comprises 544 residues: Ceramide glucosyltransferase (544 aa).

Topologically, residues 1–15 (MVQEELSLFRITTGY) are lumenal. A helical membrane pass occupies residues 16–36 (FFLLWYIIILVAAYSGFFEIL). Residues 37-427 (FNFRNRPILH…LATLIEPTTE (391 aa)) lie on the Cytoplasmic side of the membrane. A short sequence motif (D1) is located at residue aspartate 109. Position 171 (aspartate 171) is a short sequence motif, D2. Aspartate 364 is a short sequence motif (D3). The Proton acceptor role is filled by aspartate 364. Residues 404 to 408 (RRVRW) carry the (Q/R)XXRW motif. A helical transmembrane segment spans residues 428–448 (SIICGIYGTYAISTVFFGTWF). At 449–451 (NKY) the chain is on the lumenal side. Residues 452-472 (WFVMHMLIWMLTDYVQYHTLI) form a helical membrane-spanning segment. The Cytoplasmic segment spans residues 473–501 (NHTLDVKNITYLPNWLNESIPPKQRNCLQ). A helical membrane pass occupies residues 502–522 (WGYIWILRELLALPIWIIAMI). The Lumenal portion of the chain corresponds to 523–544 (GHEIDWRGRPFRIKKDLTAEEM).

The protein belongs to the glycosyltransferase 2 family.

Its subcellular location is the golgi apparatus membrane. The catalysed reaction is an N-acylsphing-4-enine + UDP-alpha-D-glucose = a beta-D-glucosyl-(1&lt;-&gt;1')-N-acylsphing-4-enine + UDP + H(+). Its pathway is lipid metabolism; sphingolipid metabolism. Its function is as follows. Catalyzes the final step in the biosynthesis of the membrane lipid glucosylceramide (GluCer), the transfer of glucose to ceramide. Glucosylceramides play important roles in growth, differentiation and pathogenicity. The polypeptide is Ceramide glucosyltransferase (Candida albicans (strain SC5314 / ATCC MYA-2876) (Yeast)).